A 198-amino-acid polypeptide reads, in one-letter code: Small ribosomal subunit protein eS1 (198 aa).

It belongs to the eukaryotic ribosomal protein eS1 family.

This is Small ribosomal subunit protein eS1 from Methanospirillum hungatei JF-1 (strain ATCC 27890 / DSM 864 / NBRC 100397 / JF-1).